We begin with the raw amino-acid sequence, 398 residues long: Cholinephosphotransferase 1 (398 aa).

N-acetylalanine is present on Ala-2. The Cytoplasmic segment spans residues 2–62 (AAGAGARPAP…LLQWIPLWIA (61 aa)). A helical transmembrane segment spans residues 63 to 83 (PNTITLFGLAINLFTTLVLIF). Asn-64 serves as a coordination point for CDP-choline. The Lumenal portion of the chain corresponds to 84-93 (YCPTVTEEAP). A helical membrane pass occupies residues 94-118 (YWTYLLCALGLFIYQSLDAIDGKQA). The Mg(2+) site is built by Asp-111 and Asp-114. Arg-119 lines the CDP-choline pocket. The Cytoplasmic segment spans residues 119 to 125 (RRTNSCS). The chain crosses the membrane as a helical span at residues 126–150 (PLGELFDHGCDSLSTVFMAIGASIA). Mg(2+) is bound at residue Asp-132. His-133 serves as the catalytic Proton acceptor. Asp-136 serves as a coordination point for Mg(2+). Residues 151-160 (VRLGTHPDWL) are Lumenal-facing. Residues 161 to 179 (FFCSFVGMFMFYCAHWQTY) form a helical membrane-spanning segment. Over 180–190 (VSGVLRFGRVD) the chain is Cytoplasmic. The helical transmembrane segment at 191–207 (VTEIQVALVIVFLLSTF) threads the bilayer. Over 208 to 222 (GGAMMWDYTIPILEI) the chain is Lumenal. Residues 223-248 (KLKILPVLGVVGGLIFSCSNYFHVIL) traverse the membrane as a helical segment. Over 249-265 (HGGVGKNGSTIAGTSVL) the chain is Cytoplasmic. Residues 266-281 (SPGLHIGLIIILAIMI) traverse the membrane as a helical segment. Residues 282–293 (YKKSATNVFEKH) are Lumenal-facing. The chain crosses the membrane as a helical span at residues 294–316 (PCLYTLMFGCVFAKVAQKLVIAH). Topologically, residues 317–329 (MTKSELYLQDTVF) are cytoplasmic. A helical membrane pass occupies residues 330–339 (IGPGLLFLDQ). At 340–346 (YFNNFID) the chain is on the lumenal side. Residues 347–376 (EYVVLWIAMVITSFDMMIYFSSLCLQISRH) form a helical membrane-spanning segment. Over 377–398 (LHLSIFKTSYQQAPEQVHKHID) the chain is Cytoplasmic.

Belongs to the CDP-alcohol phosphatidyltransferase class-I family. The cofactor is Mg(2+). Requires Mn(2+) as cofactor.

It localises to the golgi apparatus membrane. The catalysed reaction is CDP-choline + a 1,2-diacyl-sn-glycerol = a 1,2-diacyl-sn-glycero-3-phosphocholine + CMP + H(+). The enzyme catalyses 1-octadecanoyl-2-(5Z,8Z,11Z,14Z-eicosatetraenoyl)-sn-glycerol + CDP-choline = 1-octadecanoyl-2-(5Z,8Z,11Z,14Z-eicosatetraenoyl)-sn-glycero-3-phosphocholine + CMP + H(+). It catalyses the reaction 1-hexadecanoyl-2-(9Z-octadecenoyl)-sn-glycerol + CDP-choline = 1-hexadecanoyl-2-(9Z-octadecenoyl)-sn-glycero-3-phosphocholine + CMP + H(+). It carries out the reaction 1-hexadecanoyl-2-(4Z,7Z,10Z,13Z,16Z,19Z-docosahexaenoyl)-sn-glycerol + CDP-choline = 1-hexadecanoyl-2-(4Z,7Z,10Z,13Z,16Z,19Z-docosahexaenoyl)-sn-glycero-3-phosphocholine + CMP + H(+). The catalysed reaction is 1,2-dioctanoyl-sn-glycerol + CDP-choline = 1,2-dioctanoyl-sn-glycero-3-phosphocholine + CMP + H(+). Its pathway is phospholipid metabolism; phosphatidylcholine biosynthesis; phosphatidylcholine from phosphocholine: step 2/2. Functionally, catalyzes the final step of de novo phosphatidylcholine (PC) synthesis, i.e. the transfer of choline phosphate from CDP-choline to the free hydroxyl of a diacylglycerol (DAG), producing a PC. It thereby plays a central role in the formation and maintenance of vesicular membranes. The chain is Cholinephosphotransferase 1 from Rattus norvegicus (Rat).